Reading from the N-terminus, the 31-residue chain is Photosystem I reaction center subunit XII (31 aa).

The chain crosses the membrane as a helical span at residues 7-26; sequence QVFLALIIALIPGILADRLG.

It belongs to the PsaM family.

It localises to the plastid. Its subcellular location is the chloroplast thylakoid membrane. In Euglena deses, this protein is Photosystem I reaction center subunit XII.